The primary structure comprises 102 residues: ATP-dependent Clp protease adapter protein ClpS (102 aa).

Belongs to the ClpS family. As to quaternary structure, binds to the N-terminal domain of the chaperone ClpA.

Involved in the modulation of the specificity of the ClpAP-mediated ATP-dependent protein degradation. The protein is ATP-dependent Clp protease adapter protein ClpS of Shewanella sediminis (strain HAW-EB3).